The chain runs to 404 residues: Glucose-1-phosphate adenylyltransferase (404 aa).

Alpha-D-glucose 1-phosphate contacts are provided by residues Tyr99, Gly164, 179–180, and Ser197; that span reads EK.

This sequence belongs to the bacterial/plant glucose-1-phosphate adenylyltransferase family.

The catalysed reaction is alpha-D-glucose 1-phosphate + ATP + H(+) = ADP-alpha-D-glucose + diphosphate. The protein operates within capsule biogenesis; capsule polysaccharide biosynthesis. Its pathway is glycan biosynthesis; glycogen biosynthesis. Its function is as follows. Involved in the biosynthesis of ADP-glucose, a building block, required in the biosynthesis of maltose-1-phosphate (M1P) and in the elongation reactions to produce linear alpha-1,4-glucans. Catalyzes the reaction between ATP and alpha-D-glucose 1-phosphate (G1P) to produce pyrophosphate and ADP-Glc. This Mycobacterium bovis (strain ATCC BAA-935 / AF2122/97) protein is Glucose-1-phosphate adenylyltransferase.